A 298-amino-acid chain; its full sequence is UPF0696 protein C11orf68 homolog (298 aa).

The segment covering 1 to 10 (MAAAAAAVAG) has biased composition (low complexity). A disordered region spans residues 1-66 (MAAAAAAVAG…EDSPGGREDG (66 aa)). A compositionally biased stretch (gly residues) spans 11-25 (AGRGGGGGGGGGGAA). The span at 41 to 50 (ERSEGRRMEP) shows a compositional bias: basic and acidic residues.

The protein belongs to the UPF0696 family.

In Mus musculus (Mouse), this protein is UPF0696 protein C11orf68 homolog (Bles03).